Reading from the N-terminus, the 190-residue chain is MRNTIKSTNSLAGYFLVSTLQMPDSRFAGQVVYVCSHNSNGALGLVINKPDCNLSFAQVLREMGMEVSRAELPSVYIGGPVSLDAAFVLYRSHPYEGNHIDITDNISLSREKELLELVVGENSSRNYLFLVGYVGWESGQLELELRDNSWLVVPGDEQVIFDLPDGEKWKAAAAYYGIDITTFNENLGYA.

This sequence belongs to the UPF0301 (AlgH) family.

In Desulfotalea psychrophila (strain LSv54 / DSM 12343), this protein is UPF0301 protein DP2218.